Here is a 317-residue protein sequence, read N- to C-terminus: ATP synthase gamma chain (317 aa).

The protein belongs to the ATPase gamma chain family. F-type ATPases have 2 components, CF(1) - the catalytic core - and CF(0) - the membrane proton channel. CF(1) has five subunits: alpha(3), beta(3), gamma(1), delta(1), epsilon(1). CF(0) has three main subunits: a, b and c.

It localises to the cellular thylakoid membrane. Produces ATP from ADP in the presence of a proton gradient across the membrane. The gamma chain is believed to be important in regulating ATPase activity and the flow of protons through the CF(0) complex. The chain is ATP synthase gamma chain from Synechococcus sp. (strain CC9902).